A 376-amino-acid chain; its full sequence is Riboflavin biosynthesis protein RibD (376 aa).

The segment at 1–150 (MEDFSEQQLF…QPYLYQRTHN (150 aa)) is deaminase. Residues 6-128 (EQQLFFMRRA…MLRQAGIQVY (123 aa)) form the CMP/dCMP-type deaminase domain. Residue H55 coordinates Zn(2+). E57 (proton donor) is an active-site residue. The Zn(2+) site is built by C80 and C89. The tract at residues 151-376 (FPWTILKSAA…SPQVFEPIRN (226 aa)) is reductase. A159 serves as a coordination point for NADP(+). S173 is a substrate binding site. W175 lines the NADP(+) pocket. Substrate is bound at residue R189. Positions 201 and 205 each coordinate NADP(+). Substrate-binding residues include L209 and R212. S230 lines the NADP(+) pocket. Residue E300 participates in substrate binding. Residue 302-308 (GTTLHTS) coordinates NADP(+).

This sequence in the N-terminal section; belongs to the cytidine and deoxycytidylate deaminase family. In the C-terminal section; belongs to the HTP reductase family. Zn(2+) serves as cofactor.

It catalyses the reaction 2,5-diamino-6-hydroxy-4-(5-phosphoribosylamino)-pyrimidine + H2O + H(+) = 5-amino-6-(5-phospho-D-ribosylamino)uracil + NH4(+). The catalysed reaction is 5-amino-6-(5-phospho-D-ribitylamino)uracil + NADP(+) = 5-amino-6-(5-phospho-D-ribosylamino)uracil + NADPH + H(+). The protein operates within cofactor biosynthesis; riboflavin biosynthesis; 5-amino-6-(D-ribitylamino)uracil from GTP: step 2/4. It functions in the pathway cofactor biosynthesis; riboflavin biosynthesis; 5-amino-6-(D-ribitylamino)uracil from GTP: step 3/4. Converts 2,5-diamino-6-(ribosylamino)-4(3h)-pyrimidinone 5'-phosphate into 5-amino-6-(ribosylamino)-2,4(1h,3h)-pyrimidinedione 5'-phosphate. In Chlamydia pneumoniae (Chlamydophila pneumoniae), this protein is Riboflavin biosynthesis protein RibD (ribD).